A 488-amino-acid chain; its full sequence is Probable cytosol aminopeptidase (488 aa).

Lys-253 and Asp-258 together coordinate Mn(2+). Residue Lys-265 is part of the active site. Residues Asp-276, Asp-335, and Glu-337 each coordinate Mn(2+). The active site involves Arg-339.

The protein belongs to the peptidase M17 family. Requires Mn(2+) as cofactor.

Its subcellular location is the cytoplasm. It carries out the reaction Release of an N-terminal amino acid, Xaa-|-Yaa-, in which Xaa is preferably Leu, but may be other amino acids including Pro although not Arg or Lys, and Yaa may be Pro. Amino acid amides and methyl esters are also readily hydrolyzed, but rates on arylamides are exceedingly low.. It catalyses the reaction Release of an N-terminal amino acid, preferentially leucine, but not glutamic or aspartic acids.. Its function is as follows. Presumably involved in the processing and regular turnover of intracellular proteins. Catalyzes the removal of unsubstituted N-terminal amino acids from various peptides. The protein is Probable cytosol aminopeptidase of Dinoroseobacter shibae (strain DSM 16493 / NCIMB 14021 / DFL 12).